A 152-amino-acid chain; its full sequence is Ribosome maturation factor RimP (152 aa).

Belongs to the RimP family.

The protein resides in the cytoplasm. Functionally, required for maturation of 30S ribosomal subunits. The sequence is that of Ribosome maturation factor RimP from Paraburkholderia xenovorans (strain LB400).